Here is an 87-residue protein sequence, read N- to C-terminus: Small ribosomal subunit protein bS16 (87 aa).

Belongs to the bacterial ribosomal protein bS16 family.

This Ehrlichia chaffeensis (strain ATCC CRL-10679 / Arkansas) protein is Small ribosomal subunit protein bS16.